We begin with the raw amino-acid sequence, 1070 residues long: Envelopment polyprotein (1070 aa).

Residues 1–17 (MMFSRVMQLALICAVTC) form the signal peptide. The Lumenal portion of the chain corresponds to 18–457 (EDNPCLWERF…SNPQCYPYGK (440 aa)). 8 disulfides stabilise this stretch: cysteine 22–cysteine 55, cysteine 152–cysteine 165, cysteine 211–cysteine 221, cysteine 267–cysteine 309, cysteine 296–cysteine 301, cysteine 353–cysteine 356, cysteine 360–cysteine 429, and cysteine 380–cysteine 385. Residue asparagine 269 is glycosylated (N-linked (GlcNAc...) asparagine; by host). The helical transmembrane segment at 458–478 (WFLLFLILATLYIIVALLKTI) threads the bilayer. The Cytoplasmic segment spans residues 479–536 (MRIFMACLSVLYGPFIIIIKISRCLGRLGKRKGERTYVRLMEALDDERKPEVVRAPVS). A golgi retention signal region spans residues 480–522 (RIFMACLSVLYGPFIIIIKISRCLGRLGKRKGERTYVRLMEAL). The interval 541–560 (KQPRIVLFIVLALLVHMALC) is internal signal sequence for glycoprotein C. The propeptide occupies 550 to 560 (VLALLVHMALC). Topologically, residues 550-1023 (VLALLVHMAL…NWLDTLFGAS (474 aa)) are lumenal. Disulfide bonds link cysteine 561/cysteine 602, cysteine 574/cysteine 584, cysteine 642/cysteine 831, cysteine 648/cysteine 696, cysteine 654/cysteine 703, cysteine 659/cysteine 685, cysteine 689/cysteine 694, cysteine 799/cysteine 813, cysteine 896/cysteine 966, and cysteine 906/cysteine 909. The segment at 648 to 654 (CRWAGSC) is fusion loop. Residues 690–701 (GGAACGCFNAAP) form a fusion loop region. Residues 1024 to 1044 (LLGKILGIGLAILSPFILILI) traverse the membrane as a helical segment. Over 1045-1070 (LRWILRVVLRRSRIRREPKYEMAKYS) the chain is Cytoplasmic.

The protein belongs to the phlebovirus envelope glycoprotein family. In terms of assembly, heterodimer with glycoprotein C. Heterodimer with glycoprotein N. Homotrimer (postfusion). Specific enzymatic cleavages in vivo yield mature proteins Glycoprotein C, and Glycoprotein N. Post-translationally, glycosylated. In terms of processing, palmitoylated.

The protein resides in the virion membrane. It localises to the host Golgi apparatus membrane. The protein localises to the host endoplasmic reticulum membrane. Its function is as follows. Structural component of the virion that interacts with glycoprotein C. It shields the hydrophobic fusion loops of the glycoprotein C, preventing premature fusion. The glycoprotein protrusions are arranged on an icosahedral lattice, with T=12 triangulation. They are able to attach the virion to the host cell receptor CD209/DC-SIGN and to promote fusion of membranes with the late endosome after endocytosis of the virion. Plays a role in the packaging of ribonucleoproteins during virus assembly. Structural component of the virion that interacts with glycoprotein N. Acts as a class II fusion protein that is activated upon acidification and subsequent repositioning of the glycoprotein N. The glycoprotein protrusions are arranged on an icosahedral lattice, with T=12 triangulation. They are able to attach the virion to the host cell receptor CD209/DC-SIGN and to promote fusion of membranes with the late endosome after endocytosis of the virion. In Amblyomma variegatum (Tropical bont tick), this protein is Envelopment polyprotein (GP).